Consider the following 224-residue polypeptide: uncharacterized protein (224 aa).

The segment covering 44-139 (TSPPIVPLPT…PSPPPSPSPL (96 aa)) has biased composition (pro residues). The interval 44–145 (TSPPIVPLPT…PSPLGEPMYY (102 aa)) is disordered.

This is an uncharacterized protein from Lepidoptera (butterflies and moths).